The primary structure comprises 337 residues: 4-hydroxy-3-methylbut-2-enyl diphosphate reductase (337 aa).

[4Fe-4S] cluster is bound at residue Cys-38. Positions 67 and 100 each coordinate (2E)-4-hydroxy-3-methylbut-2-enyl diphosphate. Residues His-67 and His-100 each contribute to the dimethylallyl diphosphate site. Residues His-67 and His-100 each coordinate isopentenyl diphosphate. Cys-122 is a binding site for [4Fe-4S] cluster. Residue His-150 participates in (2E)-4-hydroxy-3-methylbut-2-enyl diphosphate binding. Position 150 (His-150) interacts with dimethylallyl diphosphate. His-150 is an isopentenyl diphosphate binding site. Glu-152 functions as the Proton donor in the catalytic mechanism. Residue Thr-190 coordinates (2E)-4-hydroxy-3-methylbut-2-enyl diphosphate. Residue Cys-220 participates in [4Fe-4S] cluster binding. Positions 248, 249, 250, and 293 each coordinate (2E)-4-hydroxy-3-methylbut-2-enyl diphosphate. Positions 248, 249, 250, and 293 each coordinate dimethylallyl diphosphate. 4 residues coordinate isopentenyl diphosphate: Ser-248, Ser-249, Asn-250, and Ser-293.

The protein belongs to the IspH family. [4Fe-4S] cluster is required as a cofactor.

The catalysed reaction is isopentenyl diphosphate + 2 oxidized [2Fe-2S]-[ferredoxin] + H2O = (2E)-4-hydroxy-3-methylbut-2-enyl diphosphate + 2 reduced [2Fe-2S]-[ferredoxin] + 2 H(+). It carries out the reaction dimethylallyl diphosphate + 2 oxidized [2Fe-2S]-[ferredoxin] + H2O = (2E)-4-hydroxy-3-methylbut-2-enyl diphosphate + 2 reduced [2Fe-2S]-[ferredoxin] + 2 H(+). The protein operates within isoprenoid biosynthesis; dimethylallyl diphosphate biosynthesis; dimethylallyl diphosphate from (2E)-4-hydroxy-3-methylbutenyl diphosphate: step 1/1. It participates in isoprenoid biosynthesis; isopentenyl diphosphate biosynthesis via DXP pathway; isopentenyl diphosphate from 1-deoxy-D-xylulose 5-phosphate: step 6/6. Its function is as follows. Catalyzes the conversion of 1-hydroxy-2-methyl-2-(E)-butenyl 4-diphosphate (HMBPP) into a mixture of isopentenyl diphosphate (IPP) and dimethylallyl diphosphate (DMAPP). Acts in the terminal step of the DOXP/MEP pathway for isoprenoid precursor biosynthesis. In Mycolicibacterium vanbaalenii (strain DSM 7251 / JCM 13017 / BCRC 16820 / KCTC 9966 / NRRL B-24157 / PYR-1) (Mycobacterium vanbaalenii), this protein is 4-hydroxy-3-methylbut-2-enyl diphosphate reductase.